Here is a 79-residue protein sequence, read N- to C-terminus: Beta-hexatoxin-Mg1a (79 aa).

Residues 1 to 20 (MKAPATTLILVMSLISVLWA) form the signal peptide. The propeptide occupies 21–50 (TPDLEEGDLLAELGDLIATDDEYPMKPEER). Cystine bridges form between C52/C66, C59/C71, and C65/C76.

Belongs to the neurotoxin 15 family. 01 (magi-5) subfamily. As to expression, expressed by the venom gland.

The protein localises to the secreted. In terms of biological role, insect and vertebrate active toxin. Binds to site 4 of mammalian voltage-gated sodium channels and shifts the activation voltage of the mammalian Nav1.2a/SCN2A channel to more hyperpolarized voltages, whereas the insect channel, DmNav1 (para), is not affected. Competes for binding at site 3 of the insect sodium channel. Causes temporary paralysis when injected into lepidopteran larvae at 8.6 nmol/g. A low intracranial injection dose into mice causes lacrimation, closure of the eyes and sweating. A high injection dose causes extensive lacrimation and death. The chain is Beta-hexatoxin-Mg1a from Macrothele gigas (Japanese funnel web spider).